Consider the following 82-residue polypeptide: MDSSALGLTCLAAAIGMAIAAAGCGIGQGMGLKAACEGTARNPEAGGKIMVTLILGLAFVESLAIYALVVNLILLFANPFMG.

A run of 2 helical transmembrane segments spans residues 6–26 (LGLT…GCGI) and 49–69 (IMVT…YALV).

The protein belongs to the ATPase C chain family. F-type ATPases have 2 components, F(1) - the catalytic core - and F(0) - the membrane proton channel. F(1) has five subunits: alpha(3), beta(3), gamma(1), delta(1), epsilon(1). F(0) has three main subunits: a(1), b(2) and c(10-14). The alpha and beta chains form an alternating ring which encloses part of the gamma chain. F(1) is attached to F(0) by a central stalk formed by the gamma and epsilon chains, while a peripheral stalk is formed by the delta and b chains.

The protein localises to the cell inner membrane. F(1)F(0) ATP synthase produces ATP from ADP in the presence of a proton or sodium gradient. F-type ATPases consist of two structural domains, F(1) containing the extramembraneous catalytic core and F(0) containing the membrane proton channel, linked together by a central stalk and a peripheral stalk. During catalysis, ATP synthesis in the catalytic domain of F(1) is coupled via a rotary mechanism of the central stalk subunits to proton translocation. Functionally, key component of the F(0) channel; it plays a direct role in translocation across the membrane. A homomeric c-ring of between 10-14 subunits forms the central stalk rotor element with the F(1) delta and epsilon subunits. The polypeptide is ATP synthase subunit c (Nitratidesulfovibrio vulgaris (strain ATCC 29579 / DSM 644 / CCUG 34227 / NCIMB 8303 / VKM B-1760 / Hildenborough) (Desulfovibrio vulgaris)).